The primary structure comprises 493 residues: Dihydro-heme d1 dehydrogenase (493 aa).

An N-terminal signal peptide occupies residues 1-18 (MRLIGLALGLLLGALAQA). Residues 19–96 (GEAPGEALYR…ALVAYLYQAP (78 aa)) form the Cytochrome c domain. The heme c site is built by Cys31, Cys34, His35, Arg68, and Met73. Residues 114-468 (PHPLATLPSR…YDAHSLEEVK (355 aa)) are D1-heme domain. His165, Gly167, Lys169, Arg182, Arg207, Asn208, His341, Arg390, and His435 together coordinate heme d1. Heme c is bound at residue Arg182.

This sequence belongs to the cytochrome c family. As to quaternary structure, monomer. Heme c serves as cofactor.

It is found in the periplasm. The catalysed reaction is dihydro-heme d1 + A = heme d1 + AH2. It functions in the pathway porphyrin-containing compound metabolism. Its function is as follows. Involved in heme d1 biosynthesis. Catalyzes the introduction of a double bond into the propionate side chain of pyrrole ring D of dihydro-heme d1, therefore converting dihydro-heme d1 to heme d1. The protein is Dihydro-heme d1 dehydrogenase of Pseudomonas aeruginosa (strain ATCC 15692 / DSM 22644 / CIP 104116 / JCM 14847 / LMG 12228 / 1C / PRS 101 / PAO1).